The sequence spans 150 residues: Ribosomal RNA large subunit methyltransferase H (150 aa).

S-adenosyl-L-methionine-binding positions include Ala100 and Leu118–Phe123.

It belongs to the RNA methyltransferase RlmH family. Homodimer.

It is found in the cytoplasm. The catalysed reaction is pseudouridine(1915) in 23S rRNA + S-adenosyl-L-methionine = N(3)-methylpseudouridine(1915) in 23S rRNA + S-adenosyl-L-homocysteine + H(+). Specifically methylates the pseudouridine at position 1915 (m3Psi1915) in 23S rRNA. The polypeptide is Ribosomal RNA large subunit methyltransferase H (Helicobacter pylori (strain Shi470)).